The primary structure comprises 501 residues: Probable cytochrome P450 28d2 (501 aa).

Heme is bound at residue Cys-446.

The protein belongs to the cytochrome P450 family. Heme serves as cofactor.

Its subcellular location is the endoplasmic reticulum membrane. The protein resides in the microsome membrane. Functionally, may be involved in the metabolism of insect hormones and in the breakdown of synthetic insecticides. The chain is Probable cytochrome P450 28d2 (Cyp28d2) from Drosophila melanogaster (Fruit fly).